The primary structure comprises 674 residues: tRNA 5-methylaminomethyl-2-thiouridine biosynthesis bifunctional protein MnmC (674 aa).

Residues 1-246 form a tRNA (mnm(5)s(2)U34)-methyltransferase region; it reads MFIMSSISHA…KREMIAGSLS (246 aa). Residues 272–674 are FAD-dependent cmnm(5)s(2)U34 oxidoreductase; the sequence is IGGGIASATL…RKGKALTQKV (403 aa).

The protein in the N-terminal section; belongs to the methyltransferase superfamily. tRNA (mnm(5)s(2)U34)-methyltransferase family. This sequence in the C-terminal section; belongs to the DAO family. FAD serves as cofactor.

The protein localises to the cytoplasm. The enzyme catalyses 5-aminomethyl-2-thiouridine(34) in tRNA + S-adenosyl-L-methionine = 5-methylaminomethyl-2-thiouridine(34) in tRNA + S-adenosyl-L-homocysteine + H(+). In terms of biological role, catalyzes the last two steps in the biosynthesis of 5-methylaminomethyl-2-thiouridine (mnm(5)s(2)U) at the wobble position (U34) in tRNA. Catalyzes the FAD-dependent demodification of cmnm(5)s(2)U34 to nm(5)s(2)U34, followed by the transfer of a methyl group from S-adenosyl-L-methionine to nm(5)s(2)U34, to form mnm(5)s(2)U34. The protein is tRNA 5-methylaminomethyl-2-thiouridine biosynthesis bifunctional protein MnmC of Vibrio cholerae serotype O1 (strain ATCC 39315 / El Tor Inaba N16961).